A 593-amino-acid polypeptide reads, in one-letter code: Maternal uncoordinated protein 2 (593 aa).

The protein belongs to the SCC4/mau-2 family. May heterodimerize with scc-2/SCC2 to form the cohesin loading complex.

It localises to the nucleus. It is found in the nucleoplasm. The protein resides in the cytoplasm. In terms of biological role, plays an important role in the loading of the cohesin complex on to DNA. Forms a heterodimeric complex (also known as cohesin loading complex) with scc-2/SCC2 which mediates the loading of the cohesin complex onto chromatin. Required for normal development until the fourth larval stage. Functions cell autonomously to guide migrations during the development of the nervous system. Participates in the guidance of mechanosensory neuron AVM by a slt-1-independent mechanism. Regulates chromosome segregation in early embryos. The polypeptide is Maternal uncoordinated protein 2 (Caenorhabditis elegans).